The primary structure comprises 243 residues: LexA repressor 2 (243 aa).

The segment at residues 48–68 (IREIGDAVGLTSTSSVAHQLR) is a DNA-binding region (H-T-H motif). Catalysis depends on for autocatalytic cleavage activity residues S167 and K204.

The protein belongs to the peptidase S24 family. Homodimer.

It carries out the reaction Hydrolysis of Ala-|-Gly bond in repressor LexA.. Represses a number of genes involved in the response to DNA damage (SOS response), including recA and lexA. In the presence of single-stranded DNA, RecA interacts with LexA causing an autocatalytic cleavage which disrupts the DNA-binding part of LexA, leading to derepression of the SOS regulon and eventually DNA repair. This is LexA repressor 2 from Nocardia farcinica (strain IFM 10152).